Reading from the N-terminus, the 227-residue chain is Exodeoxyribonuclease (227 aa).

The catalysed reaction is Exonucleolytic cleavage in the 3'- to 5'-direction to yield nucleoside 5'-phosphates.. Functionally, 3'-5' exonuclease that preferentially uses ssDNA as substrate. Plays a role in group I intron homing. May play a role in the final step of host DNA degradation, by scavenging DNA into mononucleotides. The chain is Exodeoxyribonuclease (dexA) from Escherichia coli (Bacteriophage T4).